A 430-amino-acid chain; its full sequence is Aspartate aminotransferase, mitochondrial (430 aa).

The transit peptide at 1–29 directs the protein to the mitochondrion; it reads MALLHSARVLSGVASAFHPGLAAAASARA. The residue at position 48 (T48) is a Phosphothreonine. N6-acetyllysine is present on K59. G65 serves as a coordination point for substrate. An N6-acetyllysine; alternate modification is found at K73. N6-succinyllysine; alternate is present on K73. K82 carries the N6-acetyllysine modification. K90 is subject to N6-acetyllysine; alternate. Residue K90 is modified to N6-succinyllysine; alternate. Position 96 is a 3'-nitrotyrosine; alternate (Y96). The residue at position 96 (Y96) is a Phosphotyrosine; alternate. Residue K122 is modified to N6-acetyllysine; alternate. An N6-succinyllysine; alternate modification is found at K122. S143 carries the phosphoserine modification. Position 159 is an N6-acetyllysine; alternate (K159). Residue K159 is modified to N6-succinyllysine; alternate. W162 is a substrate binding site. K185 carries the N6-acetyllysine; alternate modification. Position 185 is an N6-succinyllysine; alternate (K185). A substrate-binding site is contributed by N215. Position 227 is an N6-succinyllysine (K227). K234 bears the N6-acetyllysine mark. K279 and K296 each carry N6-acetyllysine; alternate. K279 is modified (N6-(pyridoxal phosphate)lysine; alternate). At K296 the chain carries N6-succinyllysine; alternate. K302 carries the post-translational modification N6-acetyllysine. K309 carries the N6-acetyllysine; alternate modification. N6-succinyllysine; alternate is present on K309. An Asymmetric dimethylarginine modification is found at R313. An N6-acetyllysine; alternate modification is found at K338. K338 carries the post-translational modification N6-succinyllysine; alternate. K345 is subject to N6-acetyllysine. N6-acetyllysine; alternate is present on K363. K363 carries the N6-succinyllysine; alternate modification. Residues K364 and K387 each carry the N6-acetyllysine modification. N6-acetyllysine; alternate occurs at positions 396 and 404. Residues K396 and K404 each carry the N6-succinyllysine; alternate modification. R407 is a binding site for substrate.

The protein belongs to the class-I pyridoxal-phosphate-dependent aminotransferase family. In terms of assembly, homodimer. It depends on pyridoxal 5'-phosphate as a cofactor.

The protein resides in the mitochondrion matrix. The protein localises to the cell membrane. The enzyme catalyses L-aspartate + 2-oxoglutarate = oxaloacetate + L-glutamate. The catalysed reaction is L-kynurenine + 2-oxoglutarate = kynurenate + L-glutamate + H2O. Functionally, catalyzes the irreversible transamination of the L-tryptophan metabolite L-kynurenine to form kynurenic acid (KA). As a member of the malate-aspartate shuttle, it has a key role in the intracellular NAD(H) redox balance. Is important for metabolite exchange between mitochondria and cytosol, and for amino acid metabolism. Facilitates cellular uptake of long-chain free fatty acids. In Oryctolagus cuniculus (Rabbit), this protein is Aspartate aminotransferase, mitochondrial (GOT2).